We begin with the raw amino-acid sequence, 195 residues long: 3-isopropylmalate dehydratase small subunit (195 aa).

The protein belongs to the LeuD family. LeuD type 1 subfamily. As to quaternary structure, heterodimer of LeuC and LeuD.

The enzyme catalyses (2R,3S)-3-isopropylmalate = (2S)-2-isopropylmalate. Its pathway is amino-acid biosynthesis; L-leucine biosynthesis; L-leucine from 3-methyl-2-oxobutanoate: step 2/4. Functionally, catalyzes the isomerization between 2-isopropylmalate and 3-isopropylmalate, via the formation of 2-isopropylmaleate. The chain is 3-isopropylmalate dehydratase small subunit from Koribacter versatilis (strain Ellin345).